Reading from the N-terminus, the 689-residue chain is DNA ligase (689 aa).

NAD(+)-binding positions include 40–44 (DAEYD), 89–90 (SL), and Glu121. The N6-AMP-lysine intermediate role is filled by Lys123. 4 residues coordinate NAD(+): Arg144, Glu179, Lys295, and Lys319. Zn(2+) is bound by residues Cys413, Cys416, Cys431, and Cys437. The 80-residue stretch at 610-689 (REQSSLTGKI…AEWLTLVRDI (80 aa)) folds into the BRCT domain.

This sequence belongs to the NAD-dependent DNA ligase family. LigA subfamily. Mg(2+) is required as a cofactor. Requires Mn(2+) as cofactor.

The enzyme catalyses NAD(+) + (deoxyribonucleotide)n-3'-hydroxyl + 5'-phospho-(deoxyribonucleotide)m = (deoxyribonucleotide)n+m + AMP + beta-nicotinamide D-nucleotide.. In terms of biological role, DNA ligase that catalyzes the formation of phosphodiester linkages between 5'-phosphoryl and 3'-hydroxyl groups in double-stranded DNA using NAD as a coenzyme and as the energy source for the reaction. It is essential for DNA replication and repair of damaged DNA. This is DNA ligase from Rickettsia bellii (strain RML369-C).